Reading from the N-terminus, the 485-residue chain is Glutamyl-tRNA(Gln) amidotransferase subunit A (485 aa).

Residues lysine 76 and serine 151 each act as charge relay system in the active site. Serine 175 acts as the Acyl-ester intermediate in catalysis.

It belongs to the amidase family. GatA subfamily. Heterotrimer of A, B and C subunits.

The enzyme catalyses L-glutamyl-tRNA(Gln) + L-glutamine + ATP + H2O = L-glutaminyl-tRNA(Gln) + L-glutamate + ADP + phosphate + H(+). Functionally, allows the formation of correctly charged Gln-tRNA(Gln) through the transamidation of misacylated Glu-tRNA(Gln) in organisms which lack glutaminyl-tRNA synthetase. The reaction takes place in the presence of glutamine and ATP through an activated gamma-phospho-Glu-tRNA(Gln). The protein is Glutamyl-tRNA(Gln) amidotransferase subunit A of Chlorobium luteolum (strain DSM 273 / BCRC 81028 / 2530) (Pelodictyon luteolum).